Reading from the N-terminus, the 289-residue chain is Purine nucleoside phosphorylase (289 aa).

An N-acetylmethionine modification is found at methionine 1. Phosphate is bound by residues serine 33, histidine 64, and 84–86; that span reads RFH. Tyrosine 88 contributes to the a purine D-ribonucleoside binding site. Alanine 116 contacts phosphate. Glutamate 201 and methionine 219 together coordinate a purine D-ribonucleoside. Position 220 (serine 220) interacts with phosphate. Asparagine 243 is an a purine D-ribonucleoside binding site. Phosphoserine is present on serine 251. Residue histidine 257 participates in a purine D-ribonucleoside binding.

This sequence belongs to the PNP/MTAP phosphorylase family. In terms of assembly, homotrimer. In terms of tissue distribution, expressed in red blood cells; overexpressed in red blood cells (cytoplasm) of patients with hereditary non-spherocytic hemolytic anemia of unknown etiology.

It is found in the cytoplasm. It catalyses the reaction inosine + phosphate = alpha-D-ribose 1-phosphate + hypoxanthine. The enzyme catalyses guanosine + phosphate = alpha-D-ribose 1-phosphate + guanine. It carries out the reaction 2'-deoxyguanosine + phosphate = 2-deoxy-alpha-D-ribose 1-phosphate + guanine. The catalysed reaction is 2'-deoxyinosine + phosphate = 2-deoxy-alpha-D-ribose 1-phosphate + hypoxanthine. It functions in the pathway purine metabolism; purine nucleoside salvage. With respect to regulation, inhibited by 5'-deaza-1'-aza-2c-deoxy-1'-(9-methylene)-Immucilin-G (DADMe-ImmG). Catalyzes the phosphorolytic breakdown of the N-glycosidic bond in the beta-(deoxy)ribonucleoside molecules, with the formation of the corresponding free purine bases and pentose-1-phosphate. Preferentially acts on 6-oxopurine nucleosides including inosine and guanosine. This is Purine nucleoside phosphorylase (PNP) from Homo sapiens (Human).